The primary structure comprises 789 residues: Glycerol-3-phosphate acyltransferase (789 aa).

The HXXXXD motif signature appears at 276–281 (HRSYID).

Belongs to the GPAT/DAPAT family.

Its subcellular location is the cell membrane. The enzyme catalyses sn-glycerol 3-phosphate + an acyl-CoA = a 1-acyl-sn-glycero-3-phosphate + CoA. It functions in the pathway phospholipid metabolism; CDP-diacylglycerol biosynthesis; CDP-diacylglycerol from sn-glycerol 3-phosphate: step 1/3. This is Glycerol-3-phosphate acyltransferase (plsB) from Mycobacterium tuberculosis (strain CDC 1551 / Oshkosh).